A 254-amino-acid chain; its full sequence is Phosphoribosylaminoimidazole-succinocarboxamide synthase (254 aa).

It belongs to the SAICAR synthetase family.

It catalyses the reaction 5-amino-1-(5-phospho-D-ribosyl)imidazole-4-carboxylate + L-aspartate + ATP = (2S)-2-[5-amino-1-(5-phospho-beta-D-ribosyl)imidazole-4-carboxamido]succinate + ADP + phosphate + 2 H(+). It participates in purine metabolism; IMP biosynthesis via de novo pathway; 5-amino-1-(5-phospho-D-ribosyl)imidazole-4-carboxamide from 5-amino-1-(5-phospho-D-ribosyl)imidazole-4-carboxylate: step 1/2. This chain is Phosphoribosylaminoimidazole-succinocarboxamide synthase, found in Gluconobacter oxydans (strain 621H) (Gluconobacter suboxydans).